The primary structure comprises 62 residues: DNA-directed RNA polymerase subunit Rpo10 (62 aa).

Cys-6, Cys-9, Cys-43, and Cys-44 together coordinate Zn(2+).

This sequence belongs to the archaeal Rpo10/eukaryotic RPB10 RNA polymerase subunit family. Part of the RNA polymerase complex. The cofactor is Zn(2+).

The protein resides in the cytoplasm. The catalysed reaction is RNA(n) + a ribonucleoside 5'-triphosphate = RNA(n+1) + diphosphate. Functionally, DNA-dependent RNA polymerase (RNAP) catalyzes the transcription of DNA into RNA using the four ribonucleoside triphosphates as substrates. This Methanoculleus marisnigri (strain ATCC 35101 / DSM 1498 / JR1) protein is DNA-directed RNA polymerase subunit Rpo10.